The primary structure comprises 232 residues: 7-cyano-7-deazaguanine synthase (232 aa).

Residue leucine 8–leucine 18 participates in ATP binding. The Zn(2+) site is built by cysteine 188, cysteine 198, cysteine 201, and cysteine 204.

Belongs to the QueC family. Zn(2+) serves as cofactor.

The enzyme catalyses 7-carboxy-7-deazaguanine + NH4(+) + ATP = 7-cyano-7-deazaguanine + ADP + phosphate + H2O + H(+). Its pathway is purine metabolism; 7-cyano-7-deazaguanine biosynthesis. Catalyzes the ATP-dependent conversion of 7-carboxy-7-deazaguanine (CDG) to 7-cyano-7-deazaguanine (preQ(0)). The chain is 7-cyano-7-deazaguanine synthase from Nitrosospira multiformis (strain ATCC 25196 / NCIMB 11849 / C 71).